The chain runs to 258 residues: Deoxyribose-phosphate aldolase (258 aa).

Asp-102 functions as the Proton donor/acceptor in the catalytic mechanism. Lys-165 functions as the Schiff-base intermediate with acetaldehyde in the catalytic mechanism. Lys-199 acts as the Proton donor/acceptor in catalysis.

It belongs to the DeoC/FbaB aldolase family. DeoC type 2 subfamily.

It is found in the cytoplasm. The catalysed reaction is 2-deoxy-D-ribose 5-phosphate = D-glyceraldehyde 3-phosphate + acetaldehyde. The protein operates within carbohydrate degradation; 2-deoxy-D-ribose 1-phosphate degradation; D-glyceraldehyde 3-phosphate and acetaldehyde from 2-deoxy-alpha-D-ribose 1-phosphate: step 2/2. Its function is as follows. Catalyzes a reversible aldol reaction between acetaldehyde and D-glyceraldehyde 3-phosphate to generate 2-deoxy-D-ribose 5-phosphate. This Aliivibrio fischeri (strain ATCC 700601 / ES114) (Vibrio fischeri) protein is Deoxyribose-phosphate aldolase.